The primary structure comprises 435 residues: tRNA-2-methylthio-N(6)-dimethylallyladenosine synthase (435 aa).

Residues 2-117 (KKASIITYGC…IPQAIEKIEN (116 aa)) form the MTTase N-terminal domain. [4Fe-4S] cluster-binding residues include cysteine 11, cysteine 47, cysteine 80, cysteine 154, cysteine 158, and cysteine 161. In terms of domain architecture, Radical SAM core spans 140-370 (FGSDQTASIS…MEVQNKCSFY (231 aa)). Positions 373 to 435 (SKYKGRIVKV…KTWTLYGEIV (63 aa)) constitute a TRAM domain.

The protein belongs to the methylthiotransferase family. MiaB subfamily. In terms of assembly, monomer. Requires [4Fe-4S] cluster as cofactor.

The protein resides in the cytoplasm. It carries out the reaction N(6)-dimethylallyladenosine(37) in tRNA + (sulfur carrier)-SH + AH2 + 2 S-adenosyl-L-methionine = 2-methylsulfanyl-N(6)-dimethylallyladenosine(37) in tRNA + (sulfur carrier)-H + 5'-deoxyadenosine + L-methionine + A + S-adenosyl-L-homocysteine + 2 H(+). Catalyzes the methylthiolation of N6-(dimethylallyl)adenosine (i(6)A), leading to the formation of 2-methylthio-N6-(dimethylallyl)adenosine (ms(2)i(6)A) at position 37 in tRNAs that read codons beginning with uridine. The polypeptide is tRNA-2-methylthio-N(6)-dimethylallyladenosine synthase (Fusobacterium nucleatum subsp. nucleatum (strain ATCC 25586 / DSM 15643 / BCRC 10681 / CIP 101130 / JCM 8532 / KCTC 2640 / LMG 13131 / VPI 4355)).